The primary structure comprises 146 residues: Hemoglobin subunit beta (146 aa).

The Globin domain occupies 2 to 146; sequence QWSAEEKQLI…VAHALARKYH (145 aa). Heme b contacts are provided by H63 and H92.

The protein belongs to the globin family. In terms of assembly, heterotetramer of two alpha chains and two beta chains. In terms of tissue distribution, red blood cells.

Its function is as follows. Involved in oxygen transport from the lung to the various peripheral tissues. In Struthio camelus (Common ostrich), this protein is Hemoglobin subunit beta (HBB).